The following is a 638-amino-acid chain: Neuroendocrine convertase 2 (638 aa).

The signal sequence occupies residues M1–A25. Positions E26–R109 are excised as a propeptide. The 325-residue stretch at Q129–V453 folds into the Peptidase S8 domain. Active-site charge relay system residues include D167 and H208. Disulfide bonds link C225/C376 and C317/C347. N-linked (GlcNAc...) asparagine glycosylation is present at N375. S384 acts as the Charge relay system in catalysis. In terms of domain architecture, P/Homo B spans T461 to A597. Cysteines 468 and 494 form a disulfide. 2 N-linked (GlcNAc...) asparagine glycosylation sites follow: N514 and N524.

This sequence belongs to the peptidase S8 family. Furin subfamily.

The protein localises to the cytoplasmic vesicle. The protein resides in the secretory vesicle. It localises to the secreted. The catalysed reaction is Release of protein hormones and neuropeptides from their precursors, generally by hydrolysis of -Lys-Arg-|- bonds.. Its function is as follows. Serine endopeptidase which is involved in the processing of hormone and other protein precursors at sites comprised of pairs of basic amino acid residues. Responsible for the release of glucagon from proglucagon in pancreatic A cells. In Homo sapiens (Human), this protein is Neuroendocrine convertase 2 (PCSK2).